A 401-amino-acid chain; its full sequence is Carbamoyl phosphate synthase small chain (401 aa).

Residues 1–203 form a CPSase region; the sequence is MTETAPWTTR…KGYGTLGEAD (203 aa). Residues Ser-56, Gly-255, and Gly-257 each coordinate L-glutamine. Residues 207–395 form the Glutamine amidotransferase type-1 domain; that stretch reads HVVCVDFGVK…VNLLRENKGE (189 aa). Cys-284 acts as the Nucleophile in catalysis. L-glutamine contacts are provided by Leu-285, Gln-288, Asn-326, Gly-328, and Phe-329. Catalysis depends on residues His-368 and Glu-370.

Belongs to the CarA family. In terms of assembly, composed of two chains; the small (or glutamine) chain promotes the hydrolysis of glutamine to ammonia, which is used by the large (or ammonia) chain to synthesize carbamoyl phosphate. Tetramer of heterodimers (alpha,beta)4.

The catalysed reaction is hydrogencarbonate + L-glutamine + 2 ATP + H2O = carbamoyl phosphate + L-glutamate + 2 ADP + phosphate + 2 H(+). It carries out the reaction L-glutamine + H2O = L-glutamate + NH4(+). Its pathway is amino-acid biosynthesis; L-arginine biosynthesis; carbamoyl phosphate from bicarbonate: step 1/1. The protein operates within pyrimidine metabolism; UMP biosynthesis via de novo pathway; (S)-dihydroorotate from bicarbonate: step 1/3. In terms of biological role, small subunit of the glutamine-dependent carbamoyl phosphate synthetase (CPSase). CPSase catalyzes the formation of carbamoyl phosphate from the ammonia moiety of glutamine, carbonate, and phosphate donated by ATP, constituting the first step of 2 biosynthetic pathways, one leading to arginine and/or urea and the other to pyrimidine nucleotides. The small subunit (glutamine amidotransferase) binds and cleaves glutamine to supply the large subunit with the substrate ammonia. The polypeptide is Carbamoyl phosphate synthase small chain (Agrobacterium fabrum (strain C58 / ATCC 33970) (Agrobacterium tumefaciens (strain C58))).